We begin with the raw amino-acid sequence, 203 residues long: Protein-methionine-sulfoxide reductase heme-binding subunit MsrQ (203 aa).

6 consecutive transmembrane segments (helical) span residues 10 to 30, 42 to 62, 75 to 95, 110 to 130, 147 to 167, and 169 to 189; these read IFVVGCLFPAWWLYEAAMSLL, LGLGALTFLLVTLCMTPLQKL, LGLWVFAYIVLHILAYLFFIL, PYIIVGALGFLGLLVLAITSN, LVYAVLGLGLLHFLWIVRSDL, and EWSIYALIGAVLMVLRIPAVA.

This sequence belongs to the MsrQ family. Heterodimer of a catalytic subunit (MsrP) and a heme-binding subunit (MsrQ). FMN serves as cofactor. It depends on heme b as a cofactor.

It is found in the cell inner membrane. Functionally, part of the MsrPQ system that repairs oxidized periplasmic proteins containing methionine sulfoxide residues (Met-O), using respiratory chain electrons. Thus protects these proteins from oxidative-stress damage caused by reactive species of oxygen and chlorine generated by the host defense mechanisms. MsrPQ is essential for the maintenance of envelope integrity under bleach stress, rescuing a wide series of structurally unrelated periplasmic proteins from methionine oxidation. MsrQ provides electrons for reduction to the reductase catalytic subunit MsrP, using the quinone pool of the respiratory chain. This is Protein-methionine-sulfoxide reductase heme-binding subunit MsrQ from Pseudomonas putida (strain GB-1).